Reading from the N-terminus, the 123-residue chain is Histone H2B (123 aa).

The segment at 1-31 (MPPKTSGKAAKKAGKAQKNITKNDKKKKRKR) is disordered. Pro-2 bears the N-methylproline; partial mark. Lys-44 carries the N6-succinyllysine modification. The O-linked (GlcNAc) serine glycan is linked to Ser-110. Residues Lys-114 and Lys-118 each carry the N6-succinyllysine modification. Residue Lys-118 forms a Glycyl lysine isopeptide (Lys-Gly) (interchain with G-Cter in ubiquitin) linkage.

Belongs to the histone H2B family. In terms of assembly, the nucleosome is a histone octamer containing two molecules each of H2A, H2B, H3 and H4 assembled in one H3-H4 heterotetramer and two H2A-H2B heterodimers. The octamer wraps approximately 147 bp of DNA. Phosphorylated by the catalytic component of the Dbf4-dependent kinase (DDK) complex Cdc7. Post-translationally, monoubiquitination of Lys-118 by Bre1 gives a specific tag for epigenetic transcriptional activation and is also prerequisite for histone H3 'Lys-4' and 'Lys-79' methylation. Deubiquitination of Lys-118 by the SAGA complex is involved in activating transcription of a large subset of genes. In terms of processing, methylation at Pro-2 increases upon heat shock. GlcNAcylation at Ser-110 promotes monoubiquitination of Lys-118. It fluctuates in response to extracellular glucose, and associates with transcribed genes.

It is found in the nucleus. It localises to the chromosome. Its function is as follows. Core component of nucleosome. Nucleosomes wrap and compact DNA into chromatin, limiting DNA accessibility to the cellular machineries which require DNA as a template. Histones thereby play a central role in transcription regulation, DNA repair, DNA replication and chromosomal stability. DNA accessibility is regulated via a complex set of post-translational modifications of histones, also called histone code, and nucleosome remodeling. The protein is Histone H2B (His2B) of Drosophila sechellia (Fruit fly).